Reading from the N-terminus, the 586-residue chain is Dual specificity tyrosine-phosphorylation-regulated kinase 3 (586 aa).

Residues methionine 1 to alanine 13 are compositionally biased toward basic and acidic residues. The interval methionine 1 to glycine 187 is disordered. The 314-residue stretch at tyrosine 208–isoleucine 521 folds into the Protein kinase domain. ATP is bound by residues isoleucine 214–valine 222, lysine 237, and phenylalanine 287–leucine 290. The Proton acceptor role is filled by aspartate 334. Tyrosine 368 carries the phosphotyrosine modification. The Nuclear localization signal motif lies at arginine 467–lysine 480.

The protein belongs to the protein kinase superfamily. CMGC Ser/Thr protein kinase family. MNB/DYRK subfamily. Interacts with SIRT1. Mg(2+) serves as cofactor. Post-translationally, ubiquitinated at anaphase by the anaphase-promoting complex (APC/C), leading to its degradation by the proteasome. Protein kinase activity is activated following autophosphorylation at Tyr-368.

It is found in the nucleus. Its subcellular location is the cytoplasm. The protein resides in the nucleus speckle. It localises to the cytoplasmic granule. The protein localises to the cytoskeleton. It is found in the microtubule organizing center. Its subcellular location is the centrosome. The catalysed reaction is L-seryl-[protein] + ATP = O-phospho-L-seryl-[protein] + ADP + H(+). It catalyses the reaction L-threonyl-[protein] + ATP = O-phospho-L-threonyl-[protein] + ADP + H(+). The enzyme catalyses L-tyrosyl-[protein] + ATP = O-phospho-L-tyrosyl-[protein] + ADP + H(+). Protein kinase activity is activated following autophosphorylation at Tyr-368. In terms of biological role, dual-specificity protein kinase that promotes disassembly of several types of membraneless organelles during mitosis, such as stress granules, nuclear speckles and pericentriolar material. Dual-specificity tyrosine-regulated kinases (DYRKs) autophosphorylate a critical tyrosine residue in their activation loop and phosphorylate their substrate on serine and threonine residues. Acts as a central dissolvase of membraneless organelles during the G2-to-M transition, after the nuclear-envelope breakdown: acts by mediating phosphorylation of multiple serine and threonine residues in unstructured domains of proteins, such as SRRM1 and PCM1. Does not mediate disassembly of all membraneless organelles: disassembly of P-body and nucleolus is not regulated by DYRK3. Dissolution of membraneless organelles at the onset of mitosis is also required to release mitotic regulators, such as ZNF207, from liquid-unmixed organelles where they are sequestered and keep them dissolved during mitosis. Regulates mTORC1 by mediating the dissolution of stress granules: during stressful conditions, DYRK3 partitions from the cytosol to the stress granule, together with mTORC1 components, which prevents mTORC1 signaling. When stress signals are gone, the kinase activity of DYRK3 is required for the dissolution of stress granule and mTORC1 relocation to the cytosol: acts by mediating the phosphorylation of the mTORC1 inhibitor AKT1S1, allowing full reactivation of mTORC1 signaling. Also acts as a negative regulator of EPO-dependent erythropoiesis: may place an upper limit on red cell production during stress erythropoiesis. Inhibits cell death due to cytokine withdrawal in hematopoietic progenitor cells. Promotes cell survival upon genotoxic stress through phosphorylation of SIRT1: this in turn inhibits p53/TP53 activity and apoptosis. The polypeptide is Dual specificity tyrosine-phosphorylation-regulated kinase 3 (Mus musculus (Mouse)).